Reading from the N-terminus, the 335-residue chain is Transcription factor E2F5 (335 aa).

Residues 1 to 18 (MAAAEPTSSAQPTPQAQA) show a composition bias toward low complexity. Residues 1–40 (MAAAEPTSSAQPTPQAQAQPPPHGAPSSQPSAALAGGSSR) are disordered. The DNA-binding element occupies 37-108 (GSSRHEKSLG…KNSIQWKGVG (72 aa)). The tract at residues 66–88 (LKAAADTLAVRQKRRIYDITNVL) is leucine-zipper. Positions 71–108 (DTLAVRQKRRIYDITNVLEGIDLIEKKSKNSIQWKGVG) match the DEF box motif. The interval 109–205 (AGCNTKEVID…GQNGQKKYQI (97 aa)) is dimerization. The interval 226-285 (SKPVVFPVPPPDDLTQPSSQSSTSVTPQKSTMAAQNLPEQHVSERSQTFQQTPAAEVSSG) is disordered. Over residues 238-256 (DLTQPSSQSSTSVTPQKST) the composition is skewed to low complexity. Residues 277-335 (TPAAEVSSGSISGDIIDELMSSDVFPLLRLSPTPADDYNFNLDDNEGVCDLFDVQILNY) form a transactivation region. The tract at residues 312–329 (DDYNFNLDDNEGVCDLFD) is RBL2 association.

This sequence belongs to the E2F/DP family. As to quaternary structure, component of the DRTF1/E2F transcription factor complex. Binds cooperatively with DP-1 to E2F sites. Interaction with retinoblastoma protein RB1 or proteins RBL1 and RBL2 inhibits the E2F transactivation domain. Component of the DREAM complex (also named LINC complex) at least composed of E2F4, E2F5, LIN9, LIN37, LIN52, LIN54, MYBL1, MYBL2, RBL1, RBL2, RBBP4, TFDP1 and TFDP2. The complex exists in quiescent cells where it represses cell cycle-dependent genes. It dissociates in S phase when LIN9, LIN37, LIN52 and LIN54 form a subcomplex that binds to MYBL2.

The protein resides in the nucleus. Transcriptional activator that binds to E2F sites, these sites are present in the promoter of many genes whose products are involved in cell proliferation. May mediate growth factor-initiated signal transduction. It is likely involved in the early responses of resting cells to growth factor stimulation. Specifically required for multiciliate cell differentiation: together with MCIDAS and E2F5, binds and activate genes required for centriole biogenesis. In Mus musculus (Mouse), this protein is Transcription factor E2F5 (E2f5).